A 564-amino-acid polypeptide reads, in one-letter code: CTP synthase (564 aa).

Residues Met-1 to Ile-265 form an amidoligase domain region. Ser-13 contributes to the CTP binding site. Residue Ser-13 participates in UTP binding. Residues Ser-14–Ile-19 and Asp-71 each bind ATP. Residues Asp-71 and Glu-139 each coordinate Mg(2+). Residues Asp-146–Glu-148, Lys-186–Gln-191, and Lys-222 each bind CTP. UTP contacts are provided by residues Lys-186–Gln-191 and Lys-222. One can recognise a Glutamine amidotransferase type-1 domain in the interval Ser-290–Lys-543. Position 351 (Gly-351) interacts with L-glutamine. The Nucleophile; for glutamine hydrolysis role is filled by Cys-378. Residues Leu-379–Gln-382, Glu-402, and Arg-469 each bind L-glutamine. Catalysis depends on residues His-516 and Glu-518.

Belongs to the CTP synthase family. As to quaternary structure, homotetramer.

The catalysed reaction is UTP + L-glutamine + ATP + H2O = CTP + L-glutamate + ADP + phosphate + 2 H(+). It catalyses the reaction L-glutamine + H2O = L-glutamate + NH4(+). The enzyme catalyses UTP + NH4(+) + ATP = CTP + ADP + phosphate + 2 H(+). The protein operates within pyrimidine metabolism; CTP biosynthesis via de novo pathway; CTP from UDP: step 2/2. With respect to regulation, allosterically activated by GTP, when glutamine is the substrate; GTP has no effect on the reaction when ammonia is the substrate. The allosteric effector GTP functions by stabilizing the protein conformation that binds the tetrahedral intermediate(s) formed during glutamine hydrolysis. Inhibited by the product CTP, via allosteric rather than competitive inhibition. Catalyzes the ATP-dependent amination of UTP to CTP with either L-glutamine or ammonia as the source of nitrogen. Regulates intracellular CTP levels through interactions with the four ribonucleotide triphosphates. This Nitrosomonas eutropha (strain DSM 101675 / C91 / Nm57) protein is CTP synthase.